The chain runs to 300 residues: D-alanine--D-alanine ligase (300 aa).

The ATP-grasp domain occupies 99–293; the sequence is KKILKYANIN…FAELLNSIVK (195 aa). An ATP-binding site is contributed by 126–181; that stretch reads IEKIGYPVFVKPNSGGSSVATNLVKDKEGIKEAVELALKYDKEVMIENYTKGEEIT. 3 residues coordinate Mg(2+): Asp248, Glu260, and Asn262.

Belongs to the D-alanine--D-alanine ligase family. The cofactor is Mg(2+). Mn(2+) is required as a cofactor.

Its subcellular location is the cytoplasm. It carries out the reaction 2 D-alanine + ATP = D-alanyl-D-alanine + ADP + phosphate + H(+). It functions in the pathway cell wall biogenesis; peptidoglycan biosynthesis. In terms of biological role, cell wall formation. In Clostridium botulinum (strain Okra / Type B1), this protein is D-alanine--D-alanine ligase.